The sequence spans 206 residues: Shieldin complex subunit 1 (206 aa).

The segment at 27 to 94 (SSYEASQRVS…GQLETNEEED (68 aa)) is disordered. Over residues 32-55 (SQRVSQGSSNSLSSLESHPFLSSS) the composition is skewed to low complexity. Residues 56-74 (TTDPDSNSLNTEQKGSWDS) show a composition bias toward polar residues.

In terms of assembly, component of the shieldin complex, consisting of SHLD1, SHLD2, SHLD3 and MAD2L2/REV7. Within the complex, SHLD2 forms a scaffold which interacts with a SHLD3-MAD2L2 subcomplex via its N-terminus, and with SHLD1 via its C-terminus. Interacts with ASTE1.

The protein localises to the chromosome. Component of the shieldin complex, which plays an important role in repair of DNA double-stranded breaks (DSBs). During G1 and S phase of the cell cycle, the complex functions downstream of TP53BP1 to promote non-homologous end joining (NHEJ) and suppress DNA end resection. Mediates various NHEJ-dependent processes including immunoglobulin class-switch recombination, and fusion of unprotected telomeres. This is Shieldin complex subunit 1 from Mus musculus (Mouse).